Here is a 261-residue protein sequence, read N- to C-terminus: Ribosomal RNA small subunit methyltransferase G (261 aa).

Residues Gly-94, Leu-99, 117 to 119 (EST), 145 to 146 (VE), and Arg-164 contribute to the S-adenosyl-L-methionine site.

The protein belongs to the methyltransferase superfamily. RNA methyltransferase RsmG family.

The protein resides in the cytoplasm. In terms of biological role, specifically methylates the N7 position of a guanine in 16S rRNA. The protein is Ribosomal RNA small subunit methyltransferase G of Rubrobacter xylanophilus (strain DSM 9941 / JCM 11954 / NBRC 16129 / PRD-1).